The primary structure comprises 820 residues: Potassium channel GORK (820 aa).

The Cytoplasmic segment spans residues 1 to 69; the sequence is MGRLRRRQEI…PKNRWYKAWE (69 aa). The helical transmembrane segment at 70-90 threads the bilayer; that stretch reads MFILVWAIYSSLFTPMEFGFF. The Extracellular segment spans residues 91 to 97; the sequence is RGLPERL. The chain crosses the membrane as a helical span at residues 98–118; sequence FVLDIVGQIAFLVDIVLQFFV. The Cytoplasmic segment spans residues 119 to 141; the sequence is AYRDTQTYRTVYKPTRIAFRYLK. The helical transmembrane segment at 142 to 162 threads the bilayer; that stretch reads SHFLMDFIGCFPWDLIYKASG. Residues 163 to 168 lie on the Extracellular side of the membrane; sequence KHELVR. Residues 169-189 form a helical; Voltage-sensor membrane-spanning segment; sequence YLLWIRLFRVRKVVEFFQRLE. The Cytoplasmic segment spans residues 190 to 203; sequence KDTRINYLFTRILK. The helical transmembrane segment at 204-224 threads the bilayer; the sequence is LLFVEVYCTHTAACIFYYLAT. Over 225-259 the chain is Extracellular; that stretch reads TLPPENEGYTWIGSLKLGDYSYENFREIDLWKRYT. Residues 260–279 constitute an intramembrane region (pore-forming); that stretch reads TALYFAIVTMATVGYGDIHA. The Extracellular portion of the chain corresponds to 280–285; it reads VNLREM. A helical membrane pass occupies residues 286-306; the sequence is IFVMIYVSFDMVLGAYLIGNI. Residues 307–820 lie on the Cytoplasmic side of the membrane; the sequence is TALIVKGSNT…YMISDTTDQT (514 aa). An a nucleoside 3',5'-cyclic phosphate-binding site is contributed by 386-508; the sequence is LFKGCSTEFI…ILNNIMEEKE (123 aa). ANK repeat units follow at residues 528–559, 563–592, 596–625, 627–656, 660–689, and 693–722; these read EAELALKVNSAAFQGDFYQLKSLIRSGADPNK, DGRSPLHLAACRGYEDITLFLIQEGVDVNL, FGHTPLFEAVKAGQEGVIGLLVKEGASFNL, DSGNFLCTTVAKGDSDFLKRLLSSGMNPNS, DHRTPLHVAASEGLFLMAKMLVEAGASVIS, and WGNSPLDEARLCGNKKLIKLLEDVKNAQSS. Residues 740–820 enclose the KHA domain; it reads KCTVFPFHPQ…YMISDTTDQT (81 aa).

The protein belongs to the potassium channel family. Plant (TC 1.A.1.4) subfamily. In terms of assembly, the potassium channel is probably composed of a homo- or heterotetrameric complex of pore-forming subunits. Expressed in guard cell-containing tissues, in root epidermal cells and in root hairs. Detected in vascular cells of the root and shoot.

It is found in the membrane. Major selective outward-rectifying potassium channel of the guard cell membrane. Involved in regulation of stomatal movements according to the water status. Assuming opened or closed conformations in response to the voltage difference across the membrane, the channel is activated by depolarization. Conductance of the channel is modulated in a potassium-dependent fashion. May interact with the cytoskeleton or with regulatory proteins. The polypeptide is Potassium channel GORK (GORK) (Arabidopsis thaliana (Mouse-ear cress)).